We begin with the raw amino-acid sequence, 186 residues long: Peptidyl-tRNA hydrolase (186 aa).

TRNA is bound at residue tyrosine 14. Histidine 19 functions as the Proton acceptor in the catalytic mechanism. TRNA is bound by residues tyrosine 60 and asparagine 62.

The protein belongs to the PTH family. Monomer.

It localises to the cytoplasm. The catalysed reaction is an N-acyl-L-alpha-aminoacyl-tRNA + H2O = an N-acyl-L-amino acid + a tRNA + H(+). Its function is as follows. Hydrolyzes ribosome-free peptidyl-tRNAs (with 1 or more amino acids incorporated), which drop off the ribosome during protein synthesis, or as a result of ribosome stalling. Functionally, catalyzes the release of premature peptidyl moieties from peptidyl-tRNA molecules trapped in stalled 50S ribosomal subunits, and thus maintains levels of free tRNAs and 50S ribosomes. The chain is Peptidyl-tRNA hydrolase from Mycoplasmopsis pulmonis (strain UAB CTIP) (Mycoplasma pulmonis).